Consider the following 201-residue polypeptide: Type III effector protein HopBF1 (201 aa).

ATP-binding residues include Ser39, Gln40, Lys41, Asp106, Ile108, and Asp113. The active site involves Asp154. Gln156 contributes to the ATP binding site.

Belongs to the HopBF1 family.

The protein localises to the secreted. It is found in the host cell. The catalysed reaction is L-seryl-[protein] + ATP = O-phospho-L-seryl-[protein] + ADP + H(+). Functionally, effector protein that targets and inactivates the plant molecular chaperone HSP90 during infection. HopBF1 is recognized by HSP90 as a host client. As a result, HopBF1 phosphorylates HSP90, leading to the inactivation of the HSP90 ATPase activity and chaperone function. Phosphorylation of HSP90 prevents activation of immune receptors that trigger the hypersensitive response in plants. HopBF1 is sufficient to cause severe disease symptoms in plants infected with P.syringae. In vitro, can phosphorylate the recombinant yeast HSP82 (HSP90) on Ser-99, Triticum aestivum (wheat) HSP90 and human HSP 90-beta, but not the prokaryotic HSP90 orthologs, HtpG from E.coli and P.syringae. Does not act on generic protein kinase substrates such as casein and myelin basic protein, as well as the yeast HSP70s and Bip chaperones. The sequence is that of Type III effector protein HopBF1 from Pseudomonas syringae pv. syringae (strain FF5).